A 436-amino-acid polypeptide reads, in one-letter code: 3-ketoacyl-CoA thiolase (436 aa).

The active-site Acyl-thioester intermediate is C99. Residues H392 and C422 each act as proton acceptor in the active site.

This sequence belongs to the thiolase-like superfamily. Thiolase family. Heterotetramer of two alpha chains (FadJ) and two beta chains (FadI).

It localises to the cytoplasm. It catalyses the reaction an acyl-CoA + acetyl-CoA = a 3-oxoacyl-CoA + CoA. The protein operates within lipid metabolism; fatty acid beta-oxidation. Functionally, catalyzes the final step of fatty acid oxidation in which acetyl-CoA is released and the CoA ester of a fatty acid two carbons shorter is formed. In Serratia proteamaculans (strain 568), this protein is 3-ketoacyl-CoA thiolase.